Consider the following 491-residue polypeptide: DEAD-box ATP-dependent RNA helicase 36 (491 aa).

Positions 1-10 are enriched in acidic residues; sequence MEEPTPEEEG. A disordered region spans residues 1–56; sequence MEEPTPEEEGGITIMSKSRKNPKTVVNIQSQKLDSDQNTPQFEKFTNPNPSSDTTS. Polar residues predominate over residues 24–56; the sequence is TVVNIQSQKLDSDQNTPQFEKFTNPNPSSDTTS. A Q motif motif is present at residues 58 to 86; sequence TNFEGLGLAEWAVETCKELGMRKPTPVQT. The 174-residue stretch at 89 to 262 folds into the Helicase ATP-binding domain; that stretch reads VPKILAGRDV…EHSSNKAYFY (174 aa). 102–109 lines the ATP pocket; the sequence is AQTGSGKT. The short motif at 210 to 213 is the DEAD box element; it reads DEAD. The Helicase C-terminal domain occupies 289-438; that stretch reads YLVHILSQME…NKKVITDSLE (150 aa). Positions 471–491 are disordered; sequence KTLADKGLLKKRGKRQKSTEN. The segment covering 479–491 has biased composition (basic residues); sequence LKKRGKRQKSTEN.

It belongs to the DEAD box helicase family. DDX49/DBP8 subfamily.

It catalyses the reaction ATP + H2O = ADP + phosphate + H(+). This is DEAD-box ATP-dependent RNA helicase 36 (RH36) from Arabidopsis thaliana (Mouse-ear cress).